We begin with the raw amino-acid sequence, 903 residues long: Protein translocase subunit SecA (903 aa).

ATP contacts are provided by residues glutamine 89, 107–111 (GEGKT), and aspartate 502. Positions 886, 888, 897, and 898 each coordinate Zn(2+).

The protein belongs to the SecA family. As to quaternary structure, monomer and homodimer. Part of the essential Sec protein translocation apparatus which comprises SecA, SecYEG and auxiliary proteins SecDF-YajC and YidC. It depends on Zn(2+) as a cofactor.

The protein localises to the cell inner membrane. It is found in the cytoplasm. It carries out the reaction ATP + H2O + cellular proteinSide 1 = ADP + phosphate + cellular proteinSide 2.. Functionally, part of the Sec protein translocase complex. Interacts with the SecYEG preprotein conducting channel. Has a central role in coupling the hydrolysis of ATP to the transfer of proteins into and across the cell membrane, serving both as a receptor for the preprotein-SecB complex and as an ATP-driven molecular motor driving the stepwise translocation of polypeptide chains across the membrane. In Rhizobium meliloti (strain 1021) (Ensifer meliloti), this protein is Protein translocase subunit SecA.